A 64-amino-acid polypeptide reads, in one-letter code: Carnocyclin-A (64 aa).

A propeptide spanning residues 1-4 (MLYE) is cleaved from the precursor. The cyclopeptide (Leu-Leu) cross-link spans 5–64 (LVAYGIAQGTAEKVVSLINAGLTVGSIISILGGVTVGLSGVFTAVKAAIAKQGIKKAIQL).

The protein resides in the secreted. In terms of biological role, cyclopeptide antibiotic that inhibits the growth of Gram-positive bacteria, but has no effect on the growth of Gram-negative bacteria. The sequence is that of Carnocyclin-A from Carnobacterium maltaromaticum (Carnobacterium piscicola).